The following is a 377-amino-acid chain: Tyrosine-protein phosphatase 2 (377 aa).

In terms of domain architecture, Tyrosine-protein phosphatase spans 27 to 347 (IDKEFNFILQ…RFCYLAISEA (321 aa)). Positions 77–137 (IDDDDDDEDD…EDHGGSGDEG (61 aa)) are disordered. Over residues 78 to 91 (DDDDDDEDDNEDDI) the composition is skewed to acidic residues. Positions 92 to 102 (IVSNNNNNNNN) are enriched in low complexity. Positions 113–123 (GSSGQSDVMSN) are enriched in polar residues. Cysteine 281 serves as the catalytic Phosphocysteine intermediate.

This sequence belongs to the protein-tyrosine phosphatase family. Non-receptor class subfamily.

It catalyses the reaction O-phospho-L-tyrosyl-[protein] + H2O = L-tyrosyl-[protein] + phosphate. This chain is Tyrosine-protein phosphatase 2 (ptpB), found in Dictyostelium discoideum (Social amoeba).